We begin with the raw amino-acid sequence, 253 residues long: Peptidase inhibitor R3HDML (253 aa).

The first 24 residues, 1–24, serve as a signal peptide directing secretion; sequence MPLLPSTVGLAGLLFWAGQAVNAL. Residues 25–56 constitute a propeptide that is removed on maturation; the sequence is IMPNATPAPAQPESTAMRLLSGLEVPRYRRKR. The SCP domain maps to 67 to 207; that stretch reads LDYHNHIRAS…HRAAYLVCNY (141 aa). Asn-120 is a glycosylation site (N-linked (GlcNAc...) asparagine).

Belongs to the CRISP family.

The protein resides in the secreted. In terms of biological role, putative serine protease inhibitor. This Homo sapiens (Human) protein is Peptidase inhibitor R3HDML (R3HDML).